The sequence spans 659 residues: UDP-glucuronate:xylan alpha-glucuronosyltransferase 1 (659 aa).

Over residues 1-14 the composition is skewed to low complexity; sequence MANSPAAPAPTTTT. The segment at 1 to 20 is disordered; it reads MANSPAAPAPTTTTGGDSRR. Residues 70–90 traverse the membrane as a helical; Signal-anchor for type II membrane protein segment; sequence FQIVKLLLFILLSATLFTIIY. Mn(2+)-binding residues include aspartate 416 and aspartate 418. Residues 416 to 418, 445 to 447, 472 to 476, and 526 to 531 contribute to the substrate site; these read DAD, NSG, NGGDQ, and HYLGMK. Histidine 526 provides a ligand contact to Mn(2+).

This sequence belongs to the glycosyltransferase 8 family. Glycogenin subfamily. Mn(2+) is required as a cofactor.

The protein localises to the golgi apparatus membrane. Its function is as follows. Glycosyltransferase required for the addition of both glucuronic acid and 4-O-methylglucuronic acid branches to xylan in stem cell walls. In association with GUX2, is responsible for almost all of the substitutions of the xylan backbone in stem glucuronoxylan. In Arabidopsis thaliana (Mouse-ear cress), this protein is UDP-glucuronate:xylan alpha-glucuronosyltransferase 1 (GUX1).